A 104-amino-acid chain; its full sequence is Turripeptide OL55-like (104 aa).

Contains 8 disulfide bonds. In terms of tissue distribution, expressed by the venom duct.

The protein resides in the secreted. In terms of biological role, acts as a neurotoxin by inhibiting an ion channel. This Iotyrris cingulifera (Sea snail) protein is Turripeptide OL55-like.